The chain runs to 160 residues: Cytochrome b6-f complex subunit 4 (160 aa).

3 consecutive transmembrane segments (helical) span residues 36–56 (LLYIFPVVILGTIACNVGLAV), 95–115 (LLGVLLMVSVPTGLLTVPFLE), and 131–151 (TVFLIGTVVALWLGIGATLPI).

Belongs to the cytochrome b family. PetD subfamily. As to quaternary structure, the 4 large subunits of the cytochrome b6-f complex are cytochrome b6, subunit IV (17 kDa polypeptide, petD), cytochrome f and the Rieske protein, while the 4 small subunits are petG, petL, petM and petN. The complex functions as a dimer.

It is found in the plastid. It localises to the chloroplast thylakoid membrane. In terms of biological role, component of the cytochrome b6-f complex, which mediates electron transfer between photosystem II (PSII) and photosystem I (PSI), cyclic electron flow around PSI, and state transitions. The chain is Cytochrome b6-f complex subunit 4 from Sorghum bicolor (Sorghum).